Here is a 331-residue protein sequence, read N- to C-terminus: Glycerophosphodiester phosphodiesterase 1 (331 aa).

Residues 1-2 (MW) lie on the Cytoplasmic side of the membrane. Residues 3–23 (LWEEQGGLMGPFSFLLLVLLL) form a helical membrane-spanning segment. The Lumenal portion of the chain corresponds to 24 to 254 (LTRSPFNACL…WKQSMFVALD (231 aa)). The GP-PDE domain maps to 65-331 (VSAIAHRGGS…SMLEDCTPEF (267 aa)). The Mg(2+) site is built by glutamate 97 and aspartate 99. The N-linked (GlcNAc...) asparagine glycan is linked to asparagine 168. Aspartate 174 contacts Mg(2+). Asparagine 198 is a glycosylation site (N-linked (GlcNAc...) asparagine). A helical transmembrane segment spans residues 255 to 275 (ILLDWSMHNILWYLCGVSAFL). Residues 276–331 (AQKDFISPDYVKKWSAKGIQVVAWTVNTFDEKSYYESHLGSSYITDSMLEDCTPEF) are Cytoplasmic-facing.

The protein belongs to the glycerophosphoryl diester phosphodiesterase family. Interacts with PRAF2. Interacts with RGS16. It depends on Mg(2+) as a cofactor. In terms of processing, N-glycosylated.

It is found in the cell membrane. The protein resides in the cytoplasmic vesicle membrane. The enzyme catalyses sn-glycero-3-phospho-1D-myo-inositol + H2O = myo-inositol + sn-glycerol 3-phosphate + H(+). It carries out the reaction 1-O-(1Z-octadecenyl)-sn-glycero-3-phospho-(N-5Z,8Z,11Z,14Z-eicosatetraenoyl)-ethanolamine + H2O = 1-O-(1Z-octadecenyl)-sn-glycero-3-phosphate + N-(5Z,8Z,11Z,14Z-eicosatetraenoyl)-ethanolamine + H(+). It catalyses the reaction 1-O-(1Z-octadecenyl)-sn-glycero-3-phospho-(N-9Z-octadecenoyl)-ethanolamine + H2O = 1-O-(1Z-octadecenyl)-sn-glycero-3-phosphate + N-(9Z-octadecenoyl) ethanolamine + H(+). The catalysed reaction is 1-O-(1Z-octadecenyl)-sn-glycero-3-phospho-N-hexadecanoyl-ethanolamine + H2O = 1-O-(1Z-octadecenyl)-sn-glycero-3-phosphate + N-hexadecanoylethanolamine + H(+). The enzyme catalyses N-(4Z,7Z,10Z,13Z,16Z,19Z)-docosahexaenoyl-sn-glycero-3-phosphoethanolamine + H2O = N-(4Z,7Z,10Z,13Z,16Z,19Z)-docosahexaenoyl ethanolamine + sn-glycerol 3-phosphate + H(+). It carries out the reaction N-eicosanoyl-sn-glycero-3-phosphoethanolamine + H2O = N-eicosanoyl ethanolamine + sn-glycerol 3-phosphate + H(+). It catalyses the reaction N-hexadecanoyl-sn-glycero-3-phosphoethanolamine + H2O = N-hexadecanoylethanolamine + sn-glycerol 3-phosphate + H(+). The catalysed reaction is N-(9Z-octadecenoyl)-sn-glycero-3-phosphoethanolamine + H2O = N-(9Z-octadecenoyl) ethanolamine + sn-glycerol 3-phosphate + H(+). The enzyme catalyses N-(5Z,8Z,11Z,14Z-eicosatetraenoyl)-sn-glycero-3-phosphoethanolamine + H2O = N-(5Z,8Z,11Z,14Z-eicosatetraenoyl)-ethanolamine + sn-glycerol 3-phosphate + H(+). With respect to regulation, inhibited by EDTA, calcium chloride, and zinc chloride. Enhanced by magnesium chloride. Glycerophosphodiester phosphodiesterase activity can be modulated by G-protein signaling pathways. In terms of biological role, hydrolyzes the phosphodiester bond of glycerophosphodiesters such as glycerophosphoinositol (GroPIns) and glycerophosphoethanolamine (GroPEth), to yield a glycerol phosphate and an alcohol. Hydrolyzes glycerophospho-N-acylethanolamines to N-acylethanolamines in the brain and participates in bioactive N-acylethanolamine biosynthesis such as anandamide (an endocannabinoid), N-palmitoylethanolamine (an anti-inflammatory), and N-oleoylethanolamine (an anorexic). In addition, has a lysophospholipase D activity by hydrolyzing N-acyl-lysoplasmenylethanolamine (N-acyl-lysoPlsEt) to N-acylethanolamine. However lysophospholipase D activity is lower than glycerophosphodiester phosphodiesterase activity. Has little or no activity towards glycerophosphocholine. This is Glycerophosphodiester phosphodiesterase 1 from Bos taurus (Bovine).